We begin with the raw amino-acid sequence, 194 residues long: Protein GrpE (194 aa).

The segment covering 1-12 (MNKQKNNRERTP) has biased composition (basic and acidic residues). Residues 1 to 44 (MNKQKNNRERTPQPEQDTERDEQLTNSHENDIDSAPAAEENDKV) form a disordered region.

The protein belongs to the GrpE family. Homodimer.

The protein localises to the cytoplasm. Its function is as follows. Participates actively in the response to hyperosmotic and heat shock by preventing the aggregation of stress-denatured proteins, in association with DnaK and GrpE. It is the nucleotide exchange factor for DnaK and may function as a thermosensor. Unfolded proteins bind initially to DnaJ; upon interaction with the DnaJ-bound protein, DnaK hydrolyzes its bound ATP, resulting in the formation of a stable complex. GrpE releases ADP from DnaK; ATP binding to DnaK triggers the release of the substrate protein, thus completing the reaction cycle. Several rounds of ATP-dependent interactions between DnaJ, DnaK and GrpE are required for fully efficient folding. This is Protein GrpE from Porphyromonas gingivalis (strain ATCC BAA-308 / W83).